The following is a 430-amino-acid chain: Cytochrome c biogenesis protein CcsB (430 aa).

Helical transmembrane passes span 14-34 (LRIAIGLLLVIALASALGTAI), 72-92 (SSWFLALLAWLGLALILCSWR), and 162-182 (AGPMLVHLGLVLLMLGAVWGS).

This sequence belongs to the Ccs1/CcsB family. May interact with CcsA.

It is found in the cellular thylakoid membrane. Functionally, required during biogenesis of c-type cytochromes (cytochrome c6 and cytochrome f) at the step of heme attachment. The protein is Cytochrome c biogenesis protein CcsB of Prochlorococcus marinus (strain MIT 9313).